The sequence spans 137 residues: uncharacterized protein (137 aa).

This is an uncharacterized protein from Homo sapiens (Human).